We begin with the raw amino-acid sequence, 336 residues long: Fructose-1,6-bisphosphatase class 1 (336 aa).

Residues E90, D112, L114, and D115 each coordinate Mg(2+). Substrate is bound by residues 115-118 (DGSS), N207, and K273. E279 is a binding site for Mg(2+).

This sequence belongs to the FBPase class 1 family. As to quaternary structure, homotetramer. Mg(2+) serves as cofactor.

It is found in the cytoplasm. The enzyme catalyses beta-D-fructose 1,6-bisphosphate + H2O = beta-D-fructose 6-phosphate + phosphate. Its pathway is carbohydrate biosynthesis; gluconeogenesis. The sequence is that of Fructose-1,6-bisphosphatase class 1 from Xanthomonas euvesicatoria pv. vesicatoria (strain 85-10) (Xanthomonas campestris pv. vesicatoria).